Consider the following 411-residue polypeptide: Lysosome-associated membrane glycoprotein 2 (411 aa).

The first 26 residues, 1–26 (MRLLSPVTGSKLVLLFLFLGAVRSDA), serve as a signal peptide directing secretion. A first lumenal domain region spans residues 27–188 (LKLNLTDSKG…SKHEQVCKED (162 aa)). The Lumenal segment spans residues 27–376 (LKLNLTDSKG…QDCSADEDNF (350 aa)). An intrachain disulfide couples Cys-38 to Cys-75. Asn-46, Asn-57, Asn-71, Asn-97, Asn-109, Asn-117, Asn-175, Asn-223, Asn-230, Asn-243, Asn-261, Asn-276, Asn-308, Asn-318, and Asn-357 each carry an N-linked (GlcNAc...) asparagine glycan. A disulfide bond links Cys-149 and Cys-185. Residues 189 to 229 (KTATTVAPIIHTTVPSPTTTLTPTSIPVPTPTVGNYTISNG) are hinge. Positions 230-376 (NATCLLATMG…QDCSADEDNF (147 aa)) are second lumenal domain. Cys-233 and Cys-266 are oxidised to a cystine. Cys-332 and Cys-369 form a disulfide bridge. Residues 377–400 (LVPIAVGAALGGVLILVLLAYFIG) form a helical membrane-spanning segment. Topologically, residues 401-411 (LKRHHTGYEQF) are cytoplasmic. Residues 402-405 (KRHH) are important for binding and subsequent lysosomal degradation of target proteins.

The protein belongs to the LAMP family. As to quaternary structure, monomer. Forms large homooligomers. Interacts (via its cytoplasmic region) with HSPA8; HSPA8 mediates recruitment of proteins with a KFERQ motif to the surface of the lysosome for chaperone-mediated autophagy. Interacts with HSP90 in the lysosome lumen; this enhances LAMP2 stability. Interacts with MLLT11. Interacts with ABCB9. Interacts with FURIN. Interacts with CT55; this interaction may be important for LAMP2 protein stability. Interacts with TMEM175; inhibiting the proton channel activity of TMEM175. Forms a ternary complex with RAB7A and RUFY4 (via RUN domain); the interaction with RAB7A is mediated by RUFY4 (via RUN and coiled coil domains). Post-translationally, extensively N-glycosylated. Contains a minor proportion of O-linked glycans. Contains sialylated glycans. As to expression, detected in liver, kidney, spleen and macrophages (at protein level).

The protein resides in the lysosome membrane. It is found in the endosome membrane. It localises to the cell membrane. Its subcellular location is the cytoplasmic vesicle. The protein localises to the autophagosome membrane. Functionally, lysosomal membrane glycoprotein which plays an important role in lysosome biogenesis, lysosomal pH regulation and autophagy. Acts as an important regulator of lysosomal lumen pH regulation by acting as a direct inhibitor of the proton channel TMEM175, facilitating lysosomal acidification for optimal hydrolase activity. Plays an important role in chaperone-mediated autophagy, a process that mediates lysosomal degradation of proteins in response to various stresses and as part of the normal turnover of proteins with a long biological half-live. Functions by binding target proteins, such as GAPDH, NLRP3 and MLLT11, and targeting them for lysosomal degradation. In the chaperone-mediated autophagy, acts downstream of chaperones, such as HSPA8/HSC70, which recognize and bind substrate proteins and mediate their recruitment to lysosomes, where target proteins bind LAMP2. Plays a role in lysosomal protein degradation in response to starvation. Required for the fusion of autophagosomes with lysosomes during autophagy. Cells that lack LAMP2 express normal levels of VAMP8, but fail to accumulate STX17 on autophagosomes, which is the most likely explanation for the lack of fusion between autophagosomes and lysosomes. Required for normal degradation of the contents of autophagosomes. Required for efficient MHC class II-mediated presentation of exogenous antigens via its function in lysosomal protein degradation; antigenic peptides generated by proteases in the endosomal/lysosomal compartment are captured by nascent MHC II subunits. Is not required for efficient MHC class II-mediated presentation of endogenous antigens. This Rattus norvegicus (Rat) protein is Lysosome-associated membrane glycoprotein 2 (Lamp2).